Here is a 3021-residue protein sequence, read N- to C-terminus: Genome polyprotein (3021 aa).

Ser-2 is subject to N-acetylserine; by host. Positions 2-23 are interaction with STAT1; the sequence is STLPKPQRKTKRNTIRRPQDVK. Positions 2 to 58 are interaction with EIF2AK2/PKR; sequence STLPKPQRKTKRNTIRRPQDVKFPGGGVIYVGVYVLPRRGPRLGVRATRKTSERSQP. The segment at 2 to 59 is interaction with DDX3X; it reads STLPKPQRKTKRNTIRRPQDVKFPGGGVIYVGVYVLPRRGPRLGVRATRKTSERSQPR. The segment at 2-75 is disordered; the sequence is STLPKPQRKT…PKARRSEGRS (74 aa). Topologically, residues 2 to 168 are cytoplasmic; that stretch reads STLPKPQRKT…EDGINFATGN (167 aa). 2 consecutive short sequence motifs (nuclear localization signal) follow at residues 5–13 and 38–43; these read PKPQRKTKR and PRRGPR. Residues 7–16 show a composition bias toward basic residues; the sequence is PQRKTKRNTI. The residue at position 53 (Ser-53) is a Phosphoserine; by host. 2 consecutive short sequence motifs (nuclear localization signal) follow at residues 58–64 and 66–71; these read PRGRRKP and PKARRS. Over residues 58-68 the composition is skewed to basic residues; the sequence is PRGRRKPIPKA. Phosphoserine; by host is present on residues Ser-99 and Ser-116. The important for endoplasmic reticulum and mitochondrial localization stretch occupies residues 112 to 152; the sequence is PRRRSRNLGKVIDTLTCGFADLMGYIPLVGAPLGGAARALA. An interaction with APOA2 region spans residues 122-173; the sequence is VIDTLTCGFADLMGYIPLVGAPLGGAARALAHGVRALEDGINFATGNLPGCS. The tract at residues 164–167 is important for lipid droplets localization; sequence FATG. A helical transmembrane segment spans residues 169-189; that stretch reads LPGCSFSIFLLALFSCLIHPA. Residues 178-191 constitute a propeptide, ER anchor for the core protein, removed in mature form by host signal peptidase; sequence LLALFSCLIHPAAS. Topologically, residues 190-358 are lumenal; the sequence is ASLEWRNTSG…AGAHWGIIAG (169 aa). Residues Asn-196, Asn-209, and Asn-234 are each glycosylated (N-linked (GlcNAc...) asparagine; by host). Residues 265 to 296 form an important for fusion region; sequence LVGAGTMCSALYVGDMCGPVFLVGQAFTFRPR. N-linked (GlcNAc...) asparagine; by host glycosylation is present at Asn-305. Residues 359 to 379 traverse the membrane as a helical segment; the sequence is LAYYSMQGNWAKVAIIMVMFS. Residues 380-731 are Lumenal-facing; it reads GVDASTHVTA…WEFVILIFLL (352 aa). Positions 385–412 are HVR1; the sequence is THVTAGQAARNAYGITSLFSVGAKQNLQ. Asn-417, Asn-423, and Asn-430 each carry an N-linked (GlcNAc...) (high mannose) asparagine; by host glycan. 4 cysteine pairs are disulfide-bonded: Cys-429/Cys-553, Cys-452/Cys-459, Cys-487/Cys-495, and Cys-504/Cys-509. N-linked (GlcNAc...) asparagine; by host glycosylation is present at Asn-448. The HVR2 stretch occupies residues 475–479; the sequence is ANITG. The N-linked (GlcNAc...) asparagine; by host glycan is linked to Asn-476. Residues 481 to 494 are CD81-binding 1; sequence SDDKPYCWHYAPRP. N-linked (GlcNAc...) asparagine; by host glycosylation is present at Asn-533. Residues 545-552 are CD81-binding 2; it reads PPSGRWFG. N-linked (GlcNAc...) asparagine; by host glycosylation is present at Asn-557. 4 disulfide bridges follow: Cys-565/Cys-570, Cys-587/Cys-591, Cys-603/Cys-626, and Cys-613/Cys-650. Residues Asn-629 and Asn-651 are each glycosylated (N-linked (GlcNAc...) (high mannose) asparagine; by host). Residues Cys-658 and Cys-683 are joined by a disulfide bond. A PKR/eIF2-alpha phosphorylation homology domain (PePHD) region spans residues 666–677; that stretch reads SEQHPLLHSTTE. A helical transmembrane segment spans residues 732–752; the sequence is LADARVCVALWLILTISQAEA. At 753-763 the chain is on the lumenal side; it reads ALENLVTLNAV. The chain crosses the membrane as a helical span at residues 764-784; that stretch reads AAAGTHGIGWYLVAFCAAWYV. The Cytoplasmic portion of the chain corresponds to 785–787; the sequence is RGK. The chain crosses the membrane as a helical span at residues 788 to 809; that stretch reads LVPLVTYSLTGLWSLALLVLLL. At 810-819 the chain is on the lumenal side; sequence PQRAYAWSGE. The helical transmembrane segment at 820-840 threads the bilayer; sequence DSATLGAGILVLFGFFTLSPW. The Cytoplasmic portion of the chain corresponds to 841–844; it reads YKHW. Residues 845–864 form a helical membrane-spanning segment; it reads IARLIWWNQYTICRCESALH. The Lumenal segment spans residues 865 to 887; it reads VWVPPLLARGGRDGVILLTSLLY. Residues 888–908 form a helical membrane-spanning segment; it reads PSLIFDITKLLIAALGPLYLI. In terms of domain architecture, Peptidase C18 spans 905–1032; the sequence is LYLIQATITA…DYREMGWRLL (128 aa). Over 909–1663 the chain is Cytoplasmic; that stretch reads QATITATPYF…CMSADLEVTT (755 aa). Residues 910–1212 are protease NS2-3; it reads ATITATPYFV…PVETLSTQAR (303 aa). Cys-928 carries the S-palmitoyl cysteine; by host lipid modification. The interval 935 to 955 is interaction with host SCPS1; it reads MGGKYFQMIILSLADGSNTYL. Residues His-958, Glu-978, and Cys-999 each act as for protease NS2 activity; shared with dimeric partner in the active site. Positions 1033-1214 constitute a Peptidase S29 domain; it reads APITAYAQQT…ETLSTQARSP (182 aa). Active-site charge relay system; for serine protease NS3 activity residues include His-1089 and Asp-1113. The Zn(2+) site is built by Cys-1129 and Cys-1131. Catalysis depends on Ser-1171, which acts as the Charge relay system; for serine protease NS3 activity. Zn(2+)-binding residues include Cys-1177 and His-1181. The Helicase ATP-binding domain maps to 1223-1375; that stretch reads PAVPQSYQVG…SNIEEVALGS (153 aa). 1236-1243 lines the ATP pocket; sequence APTGSGKS. Position 1243 (Ser-1243) interacts with Mg(2+). The DECH box signature appears at 1322–1325; it reads DDCH. The Helicase C-terminal domain maps to 1382–1544; sequence YGKAIPIACI…DLQPAETTVR (163 aa). The tract at residues 1492 to 1504 is RNA-binding; it reads QRRGRTGRGRLGT. A helical membrane pass occupies residues 1664 to 1684; that stretch reads STWVLLGGVLAAVAAYCLSVG. Positions 1685–1696 are NS3-binding; that stretch reads CVVIVGHIELGG. Residues 1685–1811 are Cytoplasmic-facing; the sequence is CVVIVGHIEL…SVTSPLTTNQ (127 aa). Residues 1812-1830 traverse the membrane as a helical segment; it reads TMFFNILGGWVATHLAGPQ. Residues 1831–1834 lie on the Lumenal side of the membrane; the sequence is ASSA. A helical transmembrane segment spans residues 1835–1855; it reads FVVSGLAGAAIGGIGLGRVLL. Asp-1856 is a topological domain (cytoplasmic). A helical transmembrane segment spans residues 1857-1877; it reads ILAGYGAGVSGALVAFKIMGG. Residues 1878 to 1887 lie on the Lumenal side of the membrane; that stretch reads EPPTTEDMVN. Residues 1888-1908 traverse the membrane as a helical segment; sequence LLPAILSPGALVVGVICAAIL. The Cytoplasmic segment spans residues 1909–1978; that stretch reads RRHVGPGEGP…WINEDYPSPC (70 aa). Residue Cys-1978 is the site of S-palmitoyl cysteine; by host attachment. An intramembrane segment occupies 1979–2008; that stretch reads SGDWLRIIWDWVCSVVSDFKTWLSAKIMPA. Over 2009-3000 the chain is Cytoplasmic; that stretch reads LPGLPFISCQ…YHSVSRARTR (992 aa). Residues Cys-2017, Cys-2035, Cys-2037, and Cys-2058 each coordinate Zn(2+). An FKBP8-binding region spans residues 2126 to 2214; sequence EFFTEVDGVR…ASSSASQLSA (89 aa). The segment at 2126–2338 is transcriptional activation; it reads EFFTEVDGVR…PVPPPRRKRT (213 aa). The segment at 2141–2145 is interaction with non-structural protein 4A; that stretch reads PPCRP. The interval 2193–2215 is disordered; it reads ARRLARGSPPSEASSSASQLSAP. Residues 2195-2448 form an interaction with host SKP2 region; sequence RLARGSPPSE…ALITPCSAEE (254 aa). Residues Ser-2200, Ser-2203, Ser-2207, Ser-2210, Ser-2213, and Ser-2216 each carry the phosphoserine; by host modification. A compositionally biased stretch (low complexity) spans 2200–2215; the sequence is SPPSEASSSASQLSAP. The tract at residues 2216–2255 is ISDR; it reads SLKATCQTHRPHPDAELVDANLLWRQEMGSNITRVESETK. The tract at residues 2216–2281 is interaction with EIF2AK2/PKR; sequence SLKATCQTHR…AELSAAAECF (66 aa). The tract at residues 2255 to 2312 is NS4B-binding; that stretch reads KVVILDSFEPLRAETDDAELSAAAECFKKPPKYPPALPIWARPDYNPPLLDRWKSPDY. The interval 2305–2383 is V3; the sequence is DRWKSPDYVP…DTQSSTASKV (79 aa). Disordered stretches follow at residues 2318 to 2338 and 2356 to 2419; these read HGCALPPKGAPPVPPPRRKRT and KSFP…WSTV. The SH3-binding motif lies at 2328–2331; it reads PPVP. The Nuclear localization signal signature appears at 2333–2341; sequence PRRKRTIQL. A Glycyl lysine isopeptide (Lys-Gly) (interchain with G-Cter in ubiquitin) cross-link involves residue Lys-2356. The span at 2359–2381 shows a compositional bias: low complexity; sequence PSSKPQEENSSSSGVDTQSSTAS. 2 positions are modified to phosphoserine; by host: Ser-2459 and Ser-2472. The RdRp catalytic domain maps to 2644–2762; it reads PLGFSYDTRC…VAESDGVDED (119 aa). Mg(2+) contacts are provided by Asp-2650, Asp-2748, and Asp-2749. Residues 3001-3021 form a helical membrane-spanning segment; sequence YLLLCLLLLTVGVGIFLLPAR.

The protein belongs to the hepacivirus polyprotein family. In terms of assembly, homooligomer. Interacts with E1 (via C-terminus). Interacts with the non-structural protein 5A. Interacts (via N-terminus) with host STAT1 (via SH2 domain); this interaction results in decreased STAT1 phosphorylation and ubiquitin-mediated proteasome-dependent STAT1 degradation, leading to decreased IFN-stimulated gene transcription. Interacts with host STAT3; this interaction constitutively activates STAT3. Interacts with host LTBR receptor. Interacts with host TNFRSF1A receptor and possibly induces apoptosis. Interacts with host HNRPK. Interacts with host YWHAE. Interacts with host UBE3A/E6AP. Interacts with host DDX3X. Interacts with host APOA2. Interacts with host RXRA protein. Interacts with host SP110 isoform 3/Sp110b; this interaction sequesters the transcriptional corepressor SP110 away from the nucleus. Interacts with host CREB3 nuclear transcription protein; this interaction triggers cell transformation. Interacts with host ACY3. Interacts with host C1QR1. Interacts with host RBM24; this interaction, which enhances the interaction of the mature core protein with 5'-UTR, may inhibit viral translation and favor replication. Interacts with host EIF2AK2/PKR; this interaction induces the autophosphorylation of EIF2AK2. Part of the viral assembly initiation complex composed of NS2, E1, E2, NS3, NS4A, NS5A and the mature core protein. Forms a heterodimer with envelope glycoprotein E2. Interacts with mature core protein. Interacts with protease NS2. The heterodimer E1/E2 interacts with host CLDN1; this interaction plays a role in viral entry into host cell. Interacts with host SPSB2 (via C-terminus). Part of the viral assembly initiation complex composed of NS2, E1, E2, NS3, NS4A, NS5A and the mature core protein. Interacts with host NEURL3; this interaction prevents E1 binding to glycoprotein E2. As to quaternary structure, forms a heterodimer with envelope glycoprotein E1. Interacts with host CD81 and SCARB1 receptors; these interactions play a role in viral entry into host cell. Interacts with host EIF2AK2/PKR; this interaction inhibits EIF2AK2 and probably allows the virus to evade the innate immune response. Interacts with host CD209/DC-SIGN and CLEC4M/DC-SIGNR. Interact with host SPCS1; this interaction is essential for viral particle assembly. Interacts with protease NS2. The heterodimer E1/E2 interacts with host CLDN1; this interaction plays a role in viral entry into host cell. Part of the viral assembly initiation complex composed of NS2, E1, E2, NS3, NS4A, NS5A and the mature core protein. Interacts with host SLC3A2/4F2hc; the interaction may facilitate viral entry into host cell. Interacts with human PLSCR1. In terms of assembly, homohexamer. Homoheptamer. Interacts with protease NS2. Homodimer. Interacts with host SPCS1; this interaction is essential for viral particle assembly. Interacts with envelope glycoprotein E1. Interacts with envelope glycoprotein E2. Interacts with viroporin p7. Interacts with serine protease/helicase NS3. Part of the replication complex composed of NS2, NS3, NS4A, NS4B, NS5A and the RNA-directed RNA polymerase embedded in an ER-derived membranous web. Part of the viral assembly initiation complex composed of NS2, E1, E2, NS3, NS4A, NS5A and the mature core protein. As to quaternary structure, interacts with protease NS2. Interacts with non-structural protein 4A; this interaction stabilizes the folding of NS3 serine protease. NS3-NS4A interaction is essential for NS3 activation and allows membrane anchorage of the latter. NS3/NS4A complex also prevents phosphorylation of host IRF3, thus preventing the establishment of dsRNA induced antiviral state. Interacts with host MAVS; this interaction leads to the cleavage and inhibition of host MAVS. Interacts with host TICAM1; this interaction leads to the cleavage and inhibition of host TICAM1. Interacts with host TANK-binding kinase/TBK1; this interaction results in the inhibition of the association between TBK1 and IRF3, which leads to the inhibition of IRF3 activation. Interacts with host RBM24. Part of the replication complex composed of NS2, NS3, NS4A, NS4B, NS5A and the RNA-directed RNA polymerase embedded in an ER-derived membranous web. Part of the viral assembly initiation complex composed of NS2, E1, E2, NS3, NS4A, NS5A and the mature core protein. In terms of assembly, interacts with NS3 serine protease; this interaction stabilizes the folding of NS3 serine protease. NS3-NS4A interaction is essential for NS3 activation and allows membrane anchorage of the latter. Interacts with non-structural protein 5A (via N-terminus). Part of the replication complex composed of NS2, NS3, NS4A, NS4B, NS5A and the RNA-directed RNA polymerase embedded in an ER-derived membranous web. Part of the viral assembly initiation complex composed of NS2, E1, E2, NS3, NS4A, NS5A and the mature core protein. Homomultimer. Interacts with non-structural protein NS5A. Interacts with host PLA2G4C; this interaction likely initiates the recruitment of replication complexes to lipid droplets. Interacts with host STING; this interaction disrupts the interaction between STING and TBK1 thereby suppressing the interferon signaling. Part of the replication complex composed of NS2, NS3, NS4A, NS4B, NS5A and the RNA-directed RNA polymerase embedded in an ER-derived membranous web. As to quaternary structure, monomer. Homodimer; dimerization is required for RNA-binding. Interacts with the mature core protein. Interacts (via N-terminus) with non-structural protein 4A. Interacts with non-structural protein 4B. Interacts (via region D2) with RNA-directed RNA polymerase. Part of the viral assembly initiation complex composed of NS2, E1, E2, NS3, NS4A, NS5A and the mature core protein. Part of the replication complex composed of NS2, NS3, NS4A, NS4B, NS5A and the RNA-directed RNA polymerase embedded in an ER-derived membranous web. Interacts with host GRB2. Interacts with host BIN1. Interacts with host PIK3R1. Interacts with host SRCAP. Interacts with host FKBP8. Interacts (via C-terminus) with host VAPB (via MSP domain). Interacts with host EIF2AK2/PKR; this interaction leads to disruption of EIF2AK2 dimerization by NS5A and probably allows the virus to evade the innate immune response. Interacts (via N-terminus) with host PACSIN2 (via N-terminus); this interaction attenuates protein kinase C alpha-mediated phosphorylation of PACSIN2 by disrupting the interaction between PACSIN2 and PRKCA. Interacts (via N-terminus) with host SRC kinase (via SH2 domain). Interacts with most Src-family kinases. Interacts with host IFI27 and SKP2; promotes the ubiquitin-mediated proteasomal degradation of NS5A. Interacts with host GPS2. Interacts with host TNFRSF21; this interaction allows the modulation by the virus of JNK, p38 MAPK, STAT3, and Akt signaling pathways in a DR6-dependent manner. Interacts (via N-terminus) with host CIDEB (via N-terminus); this interaction seems to regulate the association of HCV particles with APOE. Interacts with host CHKA/Choline Kinase-alpha; CHKA bridges host PI4KA and NS5A and potentiates NS5A-stimulated PI4KA activity, which then facilitates the targeting of the ternary complex to the ER for viral replication. Interacts with host SPSB2 (via C-terminus); this interaction targets NS5A for ubiquitination and degradation. Interacts with host RAB18; this interaction may promote the association of NS5A and other replicase components with lipid droplets. Interacts (via region D2) with host PPIA/CYPA; the interaction stimulates RNA-binding ability of NS5A and is dependent on the peptidyl-prolyl cis-trans isomerase activity of PPIA/CYPA. Interacts with host TRIM14; this interaction induces the degradation of NS5A. In terms of assembly, homooligomer. Interacts with non-structural protein 5A. Interacts with host VAPB. Interacts with host PRK2/PKN2. Interacts with host HNRNPA1 and SEPT6; these interactions facilitate viral replication. Part of the replication complex composed of NS2, NS3, NS4A, NS4B, NS5A and the RNA-directed RNA polymerase. It depends on Zn(2+) as a cofactor. Mg(2+) is required as a cofactor. Post-translationally, specific enzymatic cleavages in vivo yield mature proteins. The structural proteins, core, E1, E2 and p7 are produced by proteolytic processing by host signal peptidases. The core protein precursor is synthesized as a 23 kDa, which is retained in the ER membrane through the hydrophobic signal peptide. Cleavage by the signal peptidase releases the 21 kDa mature core protein. The cleavage of the core protein precursor occurs between aminoacids 176 and 188 but the exact cleavage site is not known. Some degraded forms of the core protein appear as well during the course of infection. The other proteins (p7, NS2, NS3, NS4A, NS4B, NS5A and NS5B) are cleaved by the viral proteases. Autoprocessing between NS2 and NS3 is mediated by the NS2 cysteine protease catalytic domain and regulated by the NS3 N-terminal domain. In terms of processing, phosphorylated by host PKC and PKA. Ubiquitinated; mediated by UBE3A and leading to core protein subsequent proteasomal degradation. Post-translationally, highly N-glycosylated. In terms of processing, palmitoylation is required for NS2/3 autoprocessing and E2 recruitment to membranes. Palmitoylated. This modification may play a role in its polymerization or in protein-protein interactions. Post-translationally, phosphorylated on serines in a basal form termed p56. p58 is a hyperphosphorylated form of p56. p56 and p58 coexist in the cell in roughly equivalent amounts. Hyperphosphorylation is dependent on the presence of NS4A. Host CSNK1A1/CKI-alpha or RPS6KB1 kinases may be responsible for NS5A phosphorylation. In terms of processing, tyrosine phosphorylation is essential for the interaction with host SRC. Ubiquitinated. Ubiquitination, most probably at Lys-2356, mediated by host IFI27 and SKP2 leads to proteasomal degradation, restricting viral infection. Ubiquitination by host TRIM22 leads to interruption of viral replication. Post-translationally, the N-terminus is phosphorylated by host PRK2/PKN2.

It localises to the host endoplasmic reticulum membrane. The protein resides in the host mitochondrion membrane. Its subcellular location is the virion. It is found in the host cytoplasm. The protein localises to the host nucleus. It localises to the host lipid droplet. The protein resides in the virion membrane. Its subcellular location is the host mitochondrion. It is found in the host cell membrane. The protein localises to the host perinuclear region. The catalysed reaction is Hydrolysis of four peptide bonds in the viral precursor polyprotein, commonly with Asp or Glu in the P6 position, Cys or Thr in P1 and Ser or Ala in P1'.. It catalyses the reaction a ribonucleoside 5'-triphosphate + H2O = a ribonucleoside 5'-diphosphate + phosphate + H(+). It carries out the reaction ATP + H2O = ADP + phosphate + H(+). The enzyme catalyses RNA(n) + a ribonucleoside 5'-triphosphate = RNA(n+1) + diphosphate. Its activity is regulated as follows. Inhibited by the antiviral drug hexamethylene amiloride. Inhibition by amantadine appears to be genotype-dependent. Also inhibited by long-alkyl-chain iminosugar derivatives. With respect to regulation, activity is up-regulated by PRK2/PKN2-mediated phosphorylation. Packages viral RNA to form a viral nucleocapsid, and promotes virion budding. Participates in the viral particle production as a result of its interaction with the non-structural protein 5A. Binds RNA and may function as a RNA chaperone to induce the RNA structural rearrangements taking place during virus replication. Modulates viral translation initiation by interacting with viral IRES and 40S ribosomal subunit. Affects various cell signaling pathways, host immunity and lipid metabolism. Prevents the establishment of cellular antiviral state by blocking the interferon-alpha/beta (IFN-alpha/beta) and IFN-gamma signaling pathways and by blocking the formation of phosphorylated STAT1 and promoting ubiquitin-mediated proteasome-dependent degradation of STAT1. Activates STAT3 leading to cellular transformation. Regulates the activity of cellular genes, including c-myc and c-fos. May repress the promoter of p53, and sequester CREB3 and SP110 isoform 3/Sp110b in the cytoplasm. Represses cell cycle negative regulating factor CDKN1A, thereby interrupting an important check point of normal cell cycle regulation. Targets transcription factors involved in the regulation of inflammatory responses and in the immune response: suppresses TNF-induced NF-kappa-B activation, and activates AP-1. Binds to dendritic cells (DCs) via C1QR1, resulting in down-regulation of T-lymphocytes proliferation. Alters lipid metabolism by interacting with hepatocellular proteins involved in lipid accumulation and storage. Induces up-regulation of FAS promoter activity, and thereby contributes to the increased triglyceride accumulation in hepatocytes (steatosis). In terms of biological role, forms a heterodimer with envelope glycoprotein E2, which mediates virus attachment to the host cell, virion internalization through clathrin-dependent endocytosis and fusion with host membrane. Fusion with the host cell is most likely mediated by both E1 and E2, through conformational rearrangements of the heterodimer required for fusion rather than a classical class II fusion mechanism. E1/E2 heterodimer binds host apolipoproteins such as APOB and ApoE thereby forming a lipo-viro-particle (LVP). APOE associated to the LVP allows the initial virus attachment to cell surface receptors such as the heparan sulfate proteoglycans (HSPGs), syndecan-1 (SDC1), syndecan-1 (SDC2), the low-density lipoprotein receptor (LDLR) and scavenger receptor class B type I (SCARB1). The cholesterol transfer activity of SCARB1 allows E2 exposure and binding of E2 to SCARB1 and the tetraspanin CD81. E1/E2 heterodimer binding on CD81 activates the epithelial growth factor receptor (EGFR) signaling pathway. Diffusion of the complex E1-E2-EGFR-SCARB1-CD81 to the cell lateral membrane allows further interaction with Claudin 1 (CLDN1) and occludin (OCLN) to finally trigger HCV entry. Functionally, forms a heterodimer with envelope glycoprotein E1, which mediates virus attachment to the host cell, virion internalization through clathrin-dependent endocytosis and fusion with host membrane. Fusion with the host cell is most likely mediated by both E1 and E2, through conformational rearrangements of the heterodimer required for fusion rather than a classical class II fusion mechanism. The interaction between envelope glycoprotein E2 and host apolipoprotein E/APOE allows the proper assembly, maturation and infectivity of the viral particles. This interaction is probably promoted via the up-regulation of cellular autophagy by the virus. E1/E2 heterodimer binds host apolipoproteins such as APOB and APOE thereby forming a lipo-viro-particle (LVP). APOE associated to the LVP allows the initial virus attachment to cell surface receptors such as the heparan sulfate proteoglycans (HSPGs), syndecan-1 (SDC1), syndecan-1 (SDC2), the low-density lipoprotein receptor (LDLR) and scavenger receptor class B type I (SCARB1). The cholesterol transfer activity of SCARB1 allows E2 exposure and binding of E2 to SCARB1 and the tetraspanin CD81. E1/E2 heterodimer binding on CD81 activates the epithelial growth factor receptor (EGFR) signaling pathway. Diffusion of the complex E1-E2-EGFR-SCARB1-CD81 to the cell lateral membrane allows further interaction with Claudin 1 (CLDN1) and occludin (OCLN) to finally trigger HCV entry. Inhibits host EIF2AK2/PKR activation, preventing the establishment of an antiviral state. Viral ligand for CD209/DC-SIGN and CLEC4M/DC-SIGNR, which are respectively found on dendritic cells (DCs), and on liver sinusoidal endothelial cells and macrophage-like cells of lymph node sinuses. These interactions allow the capture of circulating HCV particles by these cells and subsequent facilitated transmission to permissive cells such as hepatocytes and lymphocyte subpopulations. The interaction between E2 and host amino acid transporter complex formed by SLC3A2 and SLC7A5/LAT1 may facilitate viral entry into host cell. Its function is as follows. Ion channel protein that acts as a viroporin and plays an essential role in the assembly, envelopment and secretion of viral particles. Regulates the host cell secretory pathway, which induces the intracellular retention of viral glycoproteins and favors assembly of viral particles. Creates a pore in acidic organelles and releases Ca(2+) and H(+) in the cytoplasm of infected cells, leading to a productive viral infection. High levels of cytoplasmic Ca(2+) may trigger membrane trafficking and transport of viral ER-associated proteins to viroplasms, sites of viral genome replication. This ionic imbalance induces the assembly of the inflammasome complex, which triggers the maturation of pro-IL-1beta into IL-1beta through the action of caspase-1. Targets also host mitochondria and induces mitochondrial depolarization. In addition of its role as a viroporin, acts as a lipid raft adhesion factor. Cysteine protease required for the proteolytic auto-cleavage between the non-structural proteins NS2 and NS3. The N-terminus of NS3 is required for the function of NS2 protease (active region NS2-3). Promotes the initiation of viral particle assembly by mediating the interaction between structural and non-structural proteins. In terms of biological role, displays three enzymatic activities: serine protease with a chymotrypsin-like fold, NTPase and RNA helicase. NS3 serine protease, in association with NS4A, is responsible for the cleavages of NS3-NS4A, NS4A-NS4B, NS4B-NS5A and NS5A-NS5B. The NS3/NS4A complex prevents phosphorylation of host IRF3, thus preventing the establishment of dsRNA induced antiviral state. The NS3/NS4A complex induces host amino acid transporter component SLC3A2, thus contributing to HCV propagation. NS3 RNA helicase binds to RNA and unwinds both dsDNA and dsRNA in the 3' to 5' direction, and likely resolves RNA complicated stable secondary structures in the template strand. Binds a single ATP and catalyzes the unzipping of a single base pair of dsRNA. Inhibits host antiviral proteins TBK1 and IRF3 thereby preventing the establishment of an antiviral state. Cleaves host MAVS/CARDIF thereby preventing the establishment of an antiviral state. Cleaves host TICAM1/TRIF, thereby disrupting TLR3 signaling and preventing the establishment of an antiviral state. Functionally, peptide cofactor which forms a non-covalent complex with the N-terminal of NS3 serine protease. The NS3/NS4A complex prevents phosphorylation of host IRF3, thus preventing the establishment of dsRNA induced antiviral state. The NS3/NS4A complex induces host amino acid transporter component SLC3A2, thus contributing to HCV propagation. Its function is as follows. Induces a specific membrane alteration that serves as a scaffold for the virus replication complex. This membrane alteration gives rise to the so-called ER-derived membranous web that contains the replication complex. NS4B self-interaction contributes to its function in membranous web formation. Promotes host TRIF protein degradation in a CASP8-dependent manner thereby inhibiting host TLR3-mediated interferon signaling. Disrupts the interaction between STING and TBK1 contributing to the inhibition of interferon signaling. Phosphorylated protein that is indispensable for viral replication and assembly. Both hypo- and hyperphosphorylated states are required for the viral life cycle. The hyperphosphorylated form of NS5A is an inhibitor of viral replication. Involved in RNA-binding and especially in binding to the viral genome. Zinc is essential for RNA-binding. Participates in the viral particle production as a result of its interaction with the mature viral core protein. Its interaction with host VAPB may target the viral replication complex to vesicles. Down-regulates viral IRES translation initiation. Mediates interferon resistance, presumably by interacting with and inhibiting host EIF2AK2/PKR. Prevents BIN1-induced apoptosis. Acts as a transcriptional activator of some host genes important for viral replication when localized in the nucleus. Via the interaction with host PACSIN2, modulates lipid droplet formation in order to promote virion assembly. Modulates TNFRSF21/DR6 signaling pathway for viral propagation. In terms of biological role, RNA-dependent RNA polymerase that performs primer-template recognition and RNA synthesis during viral replication. Initiates RNA transcription/replication at a flavin adenine dinucleotide (FAD), resulting in a 5'- FAD cap on viral RNAs. In this way, recognition of viral 5' RNA by host pattern recognition receptors can be bypassed, thereby evading activation of antiviral pathways. The polypeptide is Genome polyprotein (Homo sapiens (Human)).